A 317-amino-acid chain; its full sequence is Transaldolase (317 aa).

The Schiff-base intermediate with substrate role is filled by K132.

The protein belongs to the transaldolase family. Type 1 subfamily. In terms of assembly, homodimer.

It is found in the cytoplasm. The enzyme catalyses D-sedoheptulose 7-phosphate + D-glyceraldehyde 3-phosphate = D-erythrose 4-phosphate + beta-D-fructose 6-phosphate. The protein operates within carbohydrate degradation; pentose phosphate pathway; D-glyceraldehyde 3-phosphate and beta-D-fructose 6-phosphate from D-ribose 5-phosphate and D-xylulose 5-phosphate (non-oxidative stage): step 2/3. Its function is as follows. Transaldolase is important for the balance of metabolites in the pentose-phosphate pathway. In Escherichia coli O104:H4 (strain 2009EL-2071), this protein is Transaldolase (talB).